Consider the following 71-residue polypeptide: uncharacterized protein (71 aa).

This is an uncharacterized protein from Spiroplasma virus 4 (SpV4).